The primary structure comprises 545 residues: Tetrahydrocannabinolic acid synthase (545 aa).

The N-terminal stretch at 1–28 (MNCSAFSFWFVCKIIFFFLSFHIQISIA) is a signal peptide. Cysteines 37 and 99 form a disulfide. N-linked (GlcNAc...) asparagine glycans are attached at residues Asn-65 and Asn-89. One can recognise an FAD-binding PCMH-type domain in the interval 77–251 (TTPKPLVIVT…AAWKIKLVAV (175 aa)). FAD is bound by residues 109 to 115 (TRSGGHD) and Ser-120. The segment at residues 114–176 (HDAEGMSYIS…ENLSFPGGYC (63 aa)) is a cross-link (6-(S-cysteinyl)-8alpha-(pros-histidyl)-FAD (His-Cys)). Asn-168 carries N-linked (GlcNAc...) asparagine glycosylation. FAD-binding positions include Cys-176, 180 to 184 (GVGGH), Tyr-190, Glu-236, and Ile-241. Residue His-292 coordinates cannabigerolate. Residues Asn-297, Asn-305, and Asn-329 are each glycosylated (N-linked (GlcNAc...) asparagine). 2 residues coordinate cannabigerolate: Tyr-417 and Glu-442. N-linked (GlcNAc...) asparagine glycosylation occurs at Asn-467. 481–483 (YLN) is an FAD binding site. The active-site Proton acceptor is the Tyr-484. N-linked (GlcNAc...) asparagine glycosylation occurs at Asn-499.

The protein belongs to the oxygen-dependent FAD-linked oxidoreductase family. As to quaternary structure, monomer. FAD is required as a cofactor. Post-translationally, glycosylated when produced in a heterologous system. The deglycosylated THCA synthase has more catalytic activity than the glycosylated form. In terms of processing, the FAD cofactor is bound via a bicovalent 6-S-cysteinyl, 8alpha-N1-histidyl FAD linkage. As to expression, expressed in the secretory cells of glandular trichomes.

The protein resides in the secreted. Its subcellular location is the extracellular space. It is found in the apoplast. It carries out the reaction cannabigerolate + O2 = Delta(9)-tetrahydrocannabinolate + H2O2. It participates in secondary metabolite biosynthesis; terpenoid biosynthesis. Its activity is regulated as follows. Inhibited by Hg(2+). Functionally, oxidoreductase involved in the biosynthesis of cannabinoids-related terpenophenolic natural products, which have pharmacological activity. Catalyzes the oxidative cyclization of the monoterpene moiety in cannabigerolic acid (CBGA), producing delta(9)-tetrahydrocannabinolate (THCA), the major cannabioid in drug-type Cannabis plants. Can also use cannabinerolic acid as substrate, but not cannabigerol or cannabinerol. This chain is Tetrahydrocannabinolic acid synthase, found in Cannabis sativa (Hemp).